The primary structure comprises 329 residues: MQGSVTEFLKPRLVDIEQVSTTHAKVTLEPLERGFGHTLGNALRRILLSSMPGCAVTEVEIDGVLHEYSTKEGVHEDILEILLNLKGLAIKVEGKDEVILTLNKSGAGPVVAGDITHDGDVEIANPEHVICHLTDDHAEISMRIKVERGRGYVPASARIHTEEDERPIGRLLVDATYSPVDRIAYSVEAARVEQRTDLDKLVIDMETNGTLDPEEAIRRAATILAEQLDAFVDLRDVRVPEEKEEKPEFDPILLRPVDDLELTVRSANCLKAEAIHYIGDLVQRTEVELLKTPNLGKKSLTEIKDVLASRGLSLGMRLENWPPASIAED.

An alpha N-terminal domain (alpha-NTD) region spans residues 1 to 235 (MQGSVTEFLK…EQLDAFVDLR (235 aa)). The tract at residues 249-329 (FDPILLRPVD…NWPPASIAED (81 aa)) is alpha C-terminal domain (alpha-CTD).

It belongs to the RNA polymerase alpha chain family. In terms of assembly, homodimer. The RNAP catalytic core consists of 2 alpha, 1 beta, 1 beta' and 1 omega subunit. When a sigma factor is associated with the core the holoenzyme is formed, which can initiate transcription.

The enzyme catalyses RNA(n) + a ribonucleoside 5'-triphosphate = RNA(n+1) + diphosphate. In terms of biological role, DNA-dependent RNA polymerase catalyzes the transcription of DNA into RNA using the four ribonucleoside triphosphates as substrates. The protein is DNA-directed RNA polymerase subunit alpha of Photobacterium profundum (strain SS9).